Consider the following 1212-residue polypeptide: Myosin-1 (1212 aa).

Residues 1-35 (MGITRRGKDKAAAGQAVAGGASGGRARPKKATFET) are disordered. A Myosin motor domain is found at 41 to 715 (VGVSDLTLLS…TLFALEHMRD (675 aa)). Residue 134-141 (GESGAGKT) coordinates ATP. The tract at residues 405–487 (SVGILDIYGF…PGVFSALKDA (83 aa)) is actin-binding. IQ domains follow at residues 719–739 (HNMA…RAES) and 740–765 (ATRI…HGHR). Residues 773–962 (RRRMSILGSR…AVHTQQGEPP (190 aa)) enclose the TH1 domain. Disordered stretches follow at residues 947–1064 (DFYK…APPA) and 1115–1212 (PAAY…DDDW). Residues 954–966 (VHTQQGEPPNSVS) are compositionally biased toward polar residues. Low complexity-rich tracts occupy residues 987–998 (RPGGPNGRPARG) and 1008–1052 (PGGA…ASVR). Positions 1053–1062 (APPPPPPAAP) are enriched in pro residues. Positions 1065-1124 (KAKIMAKVLYDFAGQKENEMSIKEGDLIEIVQKENNGWWLAKSGNQQAWVPAAYVEEQKQ) constitute an SH3 domain. Residues 1125-1140 (APPPVAASRPPPPAPP) show a composition bias toward pro residues. The span at 1171–1190 (MSLNGSDGSRSNTPTPSLGN) shows a compositional bias: polar residues.

The protein belongs to the TRAFAC class myosin-kinesin ATPase superfamily. Myosin family.

The protein resides in the cytoplasm. Its subcellular location is the cytoskeleton. It localises to the actin patch. Functionally, type-I myosin implicated in the organization of the actin cytoskeleton. Required for proper actin cytoskeleton polarization. At the cell cortex, assembles in patch-like structures together with proteins from the actin-polymerizing machinery and promotes actin assembly. Functions as actin nucleation-promoting factor (NPF) for the Arp2/3 complex. This Pyricularia oryzae (strain 70-15 / ATCC MYA-4617 / FGSC 8958) (Rice blast fungus) protein is Myosin-1 (MYO1).